The primary structure comprises 464 residues: tRNA-2-methylthio-N(6)-dimethylallyladenosine synthase (464 aa).

One can recognise an MTTase N-terminal domain in the interval 19 to 135 (GSYWITTFGC…LENLLGKVDL (117 aa)). [4Fe-4S] cluster-binding residues include C28, C64, C98, C170, C174, and C177. In terms of domain architecture, Radical SAM core spans 156–393 (RESSICGWVN…NELVETTSKQ (238 aa)). The 69-residue stretch at 396–464 (ERYLDSIESV…PFSLTGILCL (69 aa)) folds into the TRAM domain.

This sequence belongs to the methylthiotransferase family. MiaB subfamily. In terms of assembly, monomer. [4Fe-4S] cluster is required as a cofactor.

Its subcellular location is the cytoplasm. It catalyses the reaction N(6)-dimethylallyladenosine(37) in tRNA + (sulfur carrier)-SH + AH2 + 2 S-adenosyl-L-methionine = 2-methylsulfanyl-N(6)-dimethylallyladenosine(37) in tRNA + (sulfur carrier)-H + 5'-deoxyadenosine + L-methionine + A + S-adenosyl-L-homocysteine + 2 H(+). Functionally, catalyzes the methylthiolation of N6-(dimethylallyl)adenosine (i(6)A), leading to the formation of 2-methylthio-N6-(dimethylallyl)adenosine (ms(2)i(6)A) at position 37 in tRNAs that read codons beginning with uridine. This is tRNA-2-methylthio-N(6)-dimethylallyladenosine synthase from Prochlorococcus marinus (strain MIT 9215).